A 324-amino-acid chain; its full sequence is Beta-ketoacyl-[acyl-carrier-protein] synthase III (324 aa).

Active-site residues include Cys-116 and His-251. Residues 252–256 are ACP-binding; the sequence is QANLR. Residue Asn-281 is part of the active site.

Belongs to the thiolase-like superfamily. FabH family. As to quaternary structure, homodimer.

It is found in the cytoplasm. It catalyses the reaction malonyl-[ACP] + acetyl-CoA + H(+) = 3-oxobutanoyl-[ACP] + CO2 + CoA. The protein operates within lipid metabolism; fatty acid biosynthesis. Its function is as follows. Catalyzes the condensation reaction of fatty acid synthesis by the addition to an acyl acceptor of two carbons from malonyl-ACP. Catalyzes the first condensation reaction which initiates fatty acid synthesis and may therefore play a role in governing the total rate of fatty acid production. Possesses both acetoacetyl-ACP synthase and acetyl transacylase activities. Its substrate specificity determines the biosynthesis of branched-chain and/or straight-chain of fatty acids. The protein is Beta-ketoacyl-[acyl-carrier-protein] synthase III of Xylella fastidiosa (strain 9a5c).